The chain runs to 357 residues: tRNA N6-adenosine threonylcarbamoyltransferase (357 aa).

The Fe cation site is built by H116 and H120. Residues L139–G143, D172, G185, and N284 contribute to the substrate site. Residue D312 participates in Fe cation binding.

The protein belongs to the KAE1 / TsaD family. Fe(2+) is required as a cofactor.

It is found in the cytoplasm. The catalysed reaction is L-threonylcarbamoyladenylate + adenosine(37) in tRNA = N(6)-L-threonylcarbamoyladenosine(37) in tRNA + AMP + H(+). Required for the formation of a threonylcarbamoyl group on adenosine at position 37 (t(6)A37) in tRNAs that read codons beginning with adenine. Is involved in the transfer of the threonylcarbamoyl moiety of threonylcarbamoyl-AMP (TC-AMP) to the N6 group of A37, together with TsaE and TsaB. TsaD likely plays a direct catalytic role in this reaction. This is tRNA N6-adenosine threonylcarbamoyltransferase from Synechococcus sp. (strain CC9902).